A 275-amino-acid chain; its full sequence is Putative ankyrin repeat protein L715 (275 aa).

ANK repeat units follow at residues 94–123 (NINYGLCQAIENYHLKIVELLIDHGADINY), 124–153 (NNGLPLNLAVKNGYYDIIELLIEKKVNTND), 155–183 (IFQLLTHCCQNNLPNSLRILLKENISIDP), and 184–213 (IYSTMVNLCLDNGYAECASILINHNNSDST). The disordered stretch occupies residues 253-275 (NQDESDVGDDAENDIENDIEDDN). The span at 255-275 (DESDVGDDAENDIENDIEDDN) shows a compositional bias: acidic residues.

The protein is Putative ankyrin repeat protein L715 of Acanthamoeba polyphaga mimivirus (APMV).